Consider the following 133-residue polypeptide: MQRVTITLDDDLLETLDSLSQRRGYNNRSEAIRDILRGALAQEATQEHGTQGFAVLSYVYEHEKRDLASRIVSTQHHHHDLSVATLHVHINHDDCLEIAVLKGDMGDVQHFADDVIAQRGVRHGHLQCLPKED.

His-76, His-87, His-89, and Cys-95 together coordinate Ni(2+).

Belongs to the transcriptional regulatory CopG/NikR family. In terms of assembly, homotetramer. Requires Ni(2+) as cofactor.

In terms of biological role, transcriptional repressor of the nikABCDE operon. Is active in the presence of excessive concentrations of intracellular nickel. The polypeptide is Nickel-responsive regulator (Salmonella choleraesuis (strain SC-B67)).